The primary structure comprises 282 residues: Pantothenate synthetase (282 aa).

Position 28 to 35 (28 to 35) interacts with ATP; sequence MGALHSGH. The Proton donor role is filled by H35. (R)-pantoate is bound at residue Q59. Q59 lines the beta-alanine pocket. An ATP-binding site is contributed by 146-149; it reads GEKD. Q152 contacts (R)-pantoate. ATP-binding positions include V175 and 183-186; that span reads LSSR.

It belongs to the pantothenate synthetase family. As to quaternary structure, homodimer.

Its subcellular location is the cytoplasm. It catalyses the reaction (R)-pantoate + beta-alanine + ATP = (R)-pantothenate + AMP + diphosphate + H(+). It participates in cofactor biosynthesis; (R)-pantothenate biosynthesis; (R)-pantothenate from (R)-pantoate and beta-alanine: step 1/1. Its function is as follows. Catalyzes the condensation of pantoate with beta-alanine in an ATP-dependent reaction via a pantoyl-adenylate intermediate. The sequence is that of Pantothenate synthetase from Salinispora arenicola (strain CNS-205).